The sequence spans 388 residues: Diacylglycerol O-acyltransferase 2 (388 aa).

At 1–69 (MKTLIAAYSG…NRSKVEKQLQ (69 aa)) the chain is on the cytoplasmic side. The interval 16–40 (RQAEADRSQRSHGGPALSREGSGRW) is disordered. A helical membrane pass occupies residues 70-88 (VISVLQWVLSFLVLGVACS). Over 89-92 (AILM) the chain is Lumenal. A helical membrane pass occupies residues 93–112 (YIFCTDCWLIAVLYFTWLVF). Over 113 to 388 (DWNTPKKGGR…LPETEVLEVN (276 aa)) the chain is Cytoplasmic.

It belongs to the diacylglycerol acyltransferase family. In terms of assembly, forms multimeric complexes consisting of several DGAT2 subunits. Interacts with SLC27A1 and this interaction is enhanced in the presence of ZFYVE1. As to expression, predominantly expressed in liver and white adipose tissue. Expressed at lower level in mammary gland, testis and peripheral blood leukocytes. Expressed in sebaceous glands of normal skin but decreased psoriatic skin.

The protein localises to the endoplasmic reticulum membrane. It is found in the lipid droplet. The protein resides in the cytoplasm. Its subcellular location is the perinuclear region. The enzyme catalyses an acyl-CoA + a 1,2-diacyl-sn-glycerol = a triacyl-sn-glycerol + CoA. It carries out the reaction all-trans-retinol + an acyl-CoA = an all-trans-retinyl ester + CoA. The catalysed reaction is 2-(9Z-octadecenoyl)-glycerol + (9Z)-octadecenoyl-CoA = 1,2-di-(9Z-octadecenoyl)-sn-glycerol + CoA. It catalyses the reaction 1,2-di-(9Z-octadecenoyl)-sn-glycerol + (9Z)-octadecenoyl-CoA = 1,2,3-tri-(9Z-octadecenoyl)-glycerol + CoA. The enzyme catalyses all-trans-retinol + hexadecanoyl-CoA = all-trans-retinyl hexadecanoate + CoA. It carries out the reaction 1-O-(9Z-octadecenyl)-glycerol + (9Z)-octadecenoyl-CoA = 1-O-(9Z-octadecyl)-3-(9Z-octadecenoyl)-glycerol + CoA. The catalysed reaction is 1-(9Z-octadecenoyl)-glycerol + (9Z)-octadecenoyl-CoA = 1,2-di-(9Z-octadecenoyl)-glycerol + CoA. It catalyses the reaction 1,2-di-(9Z-octadecenoyl)-sn-glycerol + hexadecanoyl-CoA = 1,2-di-(9Z)-octadecenoyl-3-hexadecanoyl-sn-glycerol + CoA. The enzyme catalyses 1,3-di-(9Z-octadecenoyl)-glycerol + (9Z)-octadecenoyl-CoA = 1,2,3-tri-(9Z-octadecenoyl)-glycerol + CoA. It carries out the reaction 2,3-di-(9Z)-octadecenoyl-sn-glycerol + (9Z)-octadecenoyl-CoA = 1,2,3-tri-(9Z-octadecenoyl)-glycerol + CoA. The catalysed reaction is 2-(9Z-octadecenoyl)-glycerol + hexadecanoyl-CoA = 1-hexadecanoyl-2-(9Z-octadecenoyl)-sn-glycerol + CoA. It functions in the pathway glycerolipid metabolism; triacylglycerol biosynthesis. With respect to regulation, inhibited by niacin. Essential acyltransferase that catalyzes the terminal and only committed step in triacylglycerol synthesis by using diacylglycerol and fatty acyl CoA as substrates. Required for synthesis and storage of intracellular triglycerides. Probably plays a central role in cytosolic lipid accumulation. In liver, is primarily responsible for incorporating endogenously synthesized fatty acids into triglycerides. Also functions as an acyl-CoA retinol acyltransferase (ARAT). Also able to use 1-monoalkylglycerol (1-MAkG) as an acyl acceptor for the synthesis of monoalkyl-monoacylglycerol (MAMAG). This chain is Diacylglycerol O-acyltransferase 2, found in Homo sapiens (Human).